The sequence spans 169 residues: Cell division inhibitor SulA (169 aa).

Residues 106 to 112 (ALRTGNY) are ftsZ binding. The tract at residues 162 to 169 (KIHSNLYH) is lon protease binding.

The protein belongs to the SulA family. As to quaternary structure, interacts with FtsZ. Post-translationally, is rapidly cleaved and degraded by the Lon protease once DNA damage is repaired.

Functionally, component of the SOS system and an inhibitor of cell division. Accumulation of SulA causes rapid cessation of cell division and the appearance of long, non-septate filaments. In the presence of GTP, binds a polymerization-competent form of FtsZ in a 1:1 ratio, thus inhibiting FtsZ polymerization and therefore preventing it from participating in the assembly of the Z ring. This mechanism prevents the premature segregation of damaged DNA to daughter cells during cell division. In Escherichia coli O81 (strain ED1a), this protein is Cell division inhibitor SulA.